Reading from the N-terminus, the 1071-residue chain is Serine/threonine-protein phosphatase 6 regulatory ankyrin repeat subunit C (1071 aa).

28 ANK repeats span residues 7 to 36 (SDQPPLVQAIFNRNADEVKLFLHKKDEVNA), 40 to 69 (ERRTPLHAAAWLGDVHIMDLLISAGANVNA), 73 to 102 (VWLTPLHRAAASRNERAVGLLLRKGADVTA), 106 to 135 (YWQTPLHIAAANRATRCVETLLPHVSSLNM), 139 to 168 (TGRAPLHHAAQSGYQEMVKLLLNKGANLSA), 172 to 201 (KDRQPIHWAAYLGHLEVVKLLVSQGSDKSC), 205 to 234 (RGYTPLHAAAASGHVDVVKYLLRNGAEIDE), 238 to 267 (FGNTALHVACYTGQEAVANELVNRGANVNQ), 271 to 301 (RGYTPLHLAAVSTNGALCLELLVNNGADVNM), 305 to 334 (EGKSPLHMAAIHGRFTRSQILIQNGGEIDC), 338 to 367 (YGNTPLHVAAKYGHELLISTLMTNGADTAR), 371 to 400 (HGMFPLHLAVLYGSSDCCRKLLSSGQLYSI), 422 to 451 (FGRTCLHAAASGGNIECLNLLLSSGADMNK), 455 to 484 (FGRTPLHYAAANGRYQCVVVLVGAGAEVNE), 488 to 539 (SGCT…DPCL), 543 to 573 (KGYSAVHYAAAHGNKQNLELLLEMCFNTLGD), 578 to 607 (GSISPLHLAVESGHWECVTVLIESGVCVDV), 611 to 640 (VGRSVLYLASQRGHSRCVELLLSQSASCLL), 645 to 674 (SKWGPLHVAAANGHSECLRMLLCSEGGADL), 681 to 710 (EGQTPLMLAVLGGHTDCVHLLLERGACPDM), 714 to 743 (RGRTALHRGAVMGREDCLTALLSHNVSVLS), 747 to 776 (QGRSALHLAASCGHADILSNLLSAADHSQP), 784 to 814 (HGYTPAHWAAYHGHEDCLEVLLELKPCSIQE), 816 to 845 (NPFTPLHCALINGHSGSAELLLESSVCNSL), 852 to 881 (KGRTPLHAAAVAEDVAGLQLVLRQGADIDA), 885 to 915 (SGRSALMVAADYGQSGAVALLLHRAKADLSL), 919 to 951 (NKNTALHLACSKAHEMCAMLILKEIHNPILINA), and 955 to 984 (MLQMPLHIAARNGLATVVQALLNRGATVLA).

In terms of assembly, protein phosphatase 6 (PP6) holoenzyme is proposed to be a heterotrimeric complex formed by the catalytic subunit, a SAPS domain-containing subunit (PP6R) and an ankyrin repeat-domain containing regulatory subunit (ARS).

In terms of biological role, putative regulatory subunit of protein phosphatase 6 (PP6) that may be involved in the recognition of phosphoprotein substrates. This chain is Serine/threonine-protein phosphatase 6 regulatory ankyrin repeat subunit C (ankrd52), found in Danio rerio (Zebrafish).